A 511-amino-acid chain; its full sequence is MFS-type transporper mpsC (511 aa).

Positions 1-35 (MTSSTESKHSNDESTDLEKQDAEESHGLPEERKQD) are enriched in basic and acidic residues. Residues 1 to 65 (MTSSTESKHS…PDDPANPMNW (65 aa)) are disordered. Helical transmembrane passes span 74–94 (VVMA…FAPA), 108–128 (ITAA…PLVI), 147–167 (ITVA…FLVF), 169–189 (LITG…IADV), 201–221 (AFAM…GFIA), 228–248 (WVFR…YFVM), and 303–323 (PITL…ILLF). N337 carries an N-linked (GlcNAc...) asparagine glycan. The next 5 helical transmembrane spans lie at 342-362 (GLSY…FGML), 383-403 (LLLM…YGWT), 411-431 (ILPM…MMPI), 443-465 (VAAS…LPLA), and 476-496 (GWGN…PILF).

It belongs to the major facilitator superfamily.

The protein resides in the membrane. MFS-type transporper; part of the gene cluster that mediates the biosynthesis of macrophasetins, 3-decalinoyltetramic acids (DTAs) which feature a tetramate (pyrrolidine-2,4-dione) unit connected to a decalin fragment and that have potent bioactivities. Efflux pump that might be required for efficient secretion of macrophasetins. The polypeptide is MFS-type transporper mpsC (Macrophomina phaseolina (strain MS6) (Charcoal rot fungus)).